The following is a 449-amino-acid chain: Probable D-serine dehydratase (449 aa).

Lysine 119 carries the post-translational modification N6-(pyridoxal phosphate)lysine.

Belongs to the serine/threonine dehydratase family. DsdA subfamily. Pyridoxal 5'-phosphate serves as cofactor.

It catalyses the reaction D-serine = pyruvate + NH4(+). This chain is Probable D-serine dehydratase, found in Pseudomonas putida (strain ATCC 700007 / DSM 6899 / JCM 31910 / BCRC 17059 / LMG 24140 / F1).